The chain runs to 133 residues: MSLTLRVLAPDQSVFDGTAEEVILPSTTGLIGILPGHISLVTALDIGVMRVRTNGAWNSIALMGGFAEVEADDVTVLVNGAELGDSIDATTAEAELEQAKAKVSQMEGQEPSTEKIKAQQTFNRARARVQATK.

It belongs to the ATPase epsilon chain family. F-type ATPases have 2 components, CF(1) - the catalytic core - and CF(0) - the membrane proton channel. CF(1) has five subunits: alpha(3), beta(3), gamma(1), delta(1), epsilon(1). CF(0) has three main subunits: a, b and c.

The protein resides in the cellular thylakoid membrane. Functionally, produces ATP from ADP in the presence of a proton gradient across the membrane. The protein is ATP synthase epsilon chain of Prochlorococcus marinus (strain MIT 9303).